The primary structure comprises 158 residues: Transcription elongation factor GreA (158 aa).

The disordered stretch occupies residues 41–61; the sequence is GDLSENAEYHAAKEDQSHNEG. The stretch at 51 to 74 forms a coiled coil; it reads AAKEDQSHNEGRIAELEDKLARAE.

This sequence belongs to the GreA/GreB family.

Necessary for efficient RNA polymerase transcription elongation past template-encoded arresting sites. The arresting sites in DNA have the property of trapping a certain fraction of elongating RNA polymerases that pass through, resulting in locked ternary complexes. Cleavage of the nascent transcript by cleavage factors such as GreA or GreB allows the resumption of elongation from the new 3'terminus. GreA releases sequences of 2 to 3 nucleotides. This Nitrobacter hamburgensis (strain DSM 10229 / NCIMB 13809 / X14) protein is Transcription elongation factor GreA.